Here is a 626-residue protein sequence, read N- to C-terminus: Chaperone protein HtpG (626 aa).

An a; substrate-binding region spans residues 1 to 341 (MAKREFKAES…SEDLSLNISR (341 aa)). The b stretch occupies residues 342–552 (EMLQHDRQLK…DGEVTIEMEK (211 aa)). The c stretch occupies residues 553–626 (ILNAMPDNQH…FTNDICKVMA (74 aa)).

It belongs to the heat shock protein 90 family. In terms of assembly, homodimer.

Its subcellular location is the cytoplasm. Molecular chaperone. Has ATPase activity. The sequence is that of Chaperone protein HtpG from Bacillus licheniformis (strain ATCC 14580 / DSM 13 / JCM 2505 / CCUG 7422 / NBRC 12200 / NCIMB 9375 / NCTC 10341 / NRRL NRS-1264 / Gibson 46).